We begin with the raw amino-acid sequence, 351 residues long: MRAEIVKDRVLVEKKAINEFYNNGYYGRPKSSGLELTLIEAVYLAFRGKIEVEHEGKVLEFSDLFKEASILQPSFELKYIVYKDLRERGFYVQPGVTDFRVYPRGSHPGKGAAKQFIYVRSERAPMPLRDLLRSLAAAENVRKQMVLAIVDEESDITFYDVKRPRLKGEMKEPLYPDINADATFLEDRVVVWDEEASKTLFENGFYGKPLDSQRLQLSLVESRYLLEKGVLNINNRQDESMDVDAFSKMASEIEPEFNLKSSVYTDLRDKGVVPKTGFKFGSHFRVYSQVESPTKIPHSEYLIHSIPMDHEFTLPVMSRAIRLANSVRKRMLYAILTDDGVDYIDIGRLKM.

Residues Tyr287, His298, and Lys329 contribute to the active site.

The protein belongs to the tRNA-intron endonuclease family. Archaeal long subfamily. As to quaternary structure, homodimer.

It catalyses the reaction pretRNA = a 3'-half-tRNA molecule with a 5'-OH end + a 5'-half-tRNA molecule with a 2',3'-cyclic phosphate end + an intron with a 2',3'-cyclic phosphate and a 5'-hydroxyl terminus.. In terms of biological role, endonuclease that removes tRNA introns. Cleaves pre-tRNA at the 5'- and 3'-splice sites to release the intron. The products are an intron and two tRNA half-molecules bearing 2',3' cyclic phosphate and 5'-OH termini. Recognizes a pseudosymmetric substrate in which 2 bulged loops of 3 bases are separated by a stem of 4 bp. The protein is tRNA-splicing endonuclease of Methanococcoides burtonii (strain DSM 6242 / NBRC 107633 / OCM 468 / ACE-M).